The following is a 218-amino-acid chain: Lipoprotein-releasing system ATP-binding protein LolD (218 aa).

The ABC transporter domain occupies 2–218 (IKLEGITKSF…HMVDGTIKKD (217 aa)). 34–41 (GPSGAGKT) contacts ATP.

This sequence belongs to the ABC transporter superfamily. Lipoprotein translocase (TC 3.A.1.125) family. As to quaternary structure, the complex is composed of two ATP-binding proteins (LolD) and two transmembrane proteins (LolC and LolE).

It is found in the cell inner membrane. Functionally, part of the ABC transporter complex LolCDE involved in the translocation of mature outer membrane-directed lipoproteins, from the inner membrane to the periplasmic chaperone, LolA. Responsible for the formation of the LolA-lipoprotein complex in an ATP-dependent manner. The protein is Lipoprotein-releasing system ATP-binding protein LolD of Bacteroides thetaiotaomicron (strain ATCC 29148 / DSM 2079 / JCM 5827 / CCUG 10774 / NCTC 10582 / VPI-5482 / E50).